The sequence spans 446 residues: Phosphoglucosamine mutase (446 aa).

S103 acts as the Phosphoserine intermediate in catalysis. 4 residues coordinate Mg(2+): S103, D242, D244, and D246. S103 is subject to Phosphoserine.

Belongs to the phosphohexose mutase family. It depends on Mg(2+) as a cofactor. Post-translationally, activated by phosphorylation.

The catalysed reaction is alpha-D-glucosamine 1-phosphate = D-glucosamine 6-phosphate. In terms of biological role, catalyzes the conversion of glucosamine-6-phosphate to glucosamine-1-phosphate. In Vibrio vulnificus (strain CMCP6), this protein is Phosphoglucosamine mutase.